The sequence spans 342 residues: Isopentenyl-diphosphate delta-isomerase (342 aa).

R11–K12 serves as a coordination point for substrate. Residues S68, S69 to T71, S99, and N127 each bind FMN. S99–R101 contributes to the substrate binding site. Q162 is a binding site for substrate. E163 provides a ligand contact to Mg(2+). FMN contacts are provided by residues K194, T224, G274–K276, and A295–G296.

It belongs to the IPP isomerase type 2 family. Homooctamer. Dimer of tetramers. Requires FMN as cofactor. It depends on NADPH as a cofactor. Mg(2+) serves as cofactor.

It localises to the cytoplasm. It catalyses the reaction isopentenyl diphosphate = dimethylallyl diphosphate. Involved in the biosynthesis of isoprenoids. Catalyzes the 1,3-allylic rearrangement of the homoallylic substrate isopentenyl (IPP) to its allylic isomer, dimethylallyl diphosphate (DMAPP). This Rickettsia rickettsii (strain Iowa) protein is Isopentenyl-diphosphate delta-isomerase.